Here is a 155-residue protein sequence, read N- to C-terminus: 3-hydroxyacyl-[acyl-carrier-protein] dehydratase FabZ (155 aa).

The active site involves histidine 59.

The protein belongs to the thioester dehydratase family. FabZ subfamily.

The protein resides in the cytoplasm. It catalyses the reaction a (3R)-hydroxyacyl-[ACP] = a (2E)-enoyl-[ACP] + H2O. Functionally, involved in unsaturated fatty acids biosynthesis. Catalyzes the dehydration of short chain beta-hydroxyacyl-ACPs and long chain saturated and unsaturated beta-hydroxyacyl-ACPs. The sequence is that of 3-hydroxyacyl-[acyl-carrier-protein] dehydratase FabZ from Bartonella henselae (strain ATCC 49882 / DSM 28221 / CCUG 30454 / Houston 1) (Rochalimaea henselae).